A 404-amino-acid polypeptide reads, in one-letter code: 4-hydroxyphenylpyruvate dioxygenase (404 aa).

VOC domains are found at residues 28-163 and 194-353; these read GYDH…FIQR and YVDH…IFTK. 3 residues coordinate Fe cation: His197, His280, and Glu364.

It belongs to the 4HPPD family. Requires Fe cation as cofactor.

The enzyme catalyses 3-(4-hydroxyphenyl)pyruvate + O2 = homogentisate + CO2. It functions in the pathway amino-acid degradation; L-phenylalanine degradation; acetoacetate and fumarate from L-phenylalanine: step 3/6. Its function is as follows. Key enzyme in the degradation of tyrosine. The polypeptide is 4-hydroxyphenylpyruvate dioxygenase (TFA) (Tetrahymena thermophila).